Here is a 144-residue protein sequence, read N- to C-terminus: Large ribosomal subunit protein uL15 (144 aa).

A disordered region spans residues 1–57 (MLLNTLSPAAGSKHAPKRLGRGVGSGLGKTGGRGHKGQKSRSGGKVRPGFEGGQMPL). The segment covering 21–31 (RGVGSGLGKTG) has biased composition (gly residues). Basic residues predominate over residues 32–44 (GRGHKGQKSRSGG).

It belongs to the universal ribosomal protein uL15 family. Part of the 50S ribosomal subunit.

Its function is as follows. Binds to the 23S rRNA. The chain is Large ribosomal subunit protein uL15 from Vibrio cholerae serotype O1 (strain ATCC 39315 / El Tor Inaba N16961).